The primary structure comprises 268 residues: Phosphatidylglycerol--prolipoprotein diacylglyceryl transferase (268 aa).

A run of 3 helical transmembrane segments spans residues 16–36 (FITLRWYGLLIAVAVFIGIWL), 56–76 (IWLVVAAIPAARLYYVAFNWG), and 92–112 (GIAIHGAILGGIVAMAIFTYV). Arg136 contributes to the a 1,2-diacyl-sn-glycero-3-phospho-(1'-sn-glycerol) binding site. The next 3 membrane-spanning stretches (helical) occupy residues 175-195 (PTFLYESLWNVGVFLLLLWLF), 204-224 (GTLLMVYAIAYSLGRFWIEGL), and 236-256 (IAQVVSLVAIALGSWGLFRLY).

This sequence belongs to the Lgt family.

The protein resides in the cell inner membrane. The enzyme catalyses L-cysteinyl-[prolipoprotein] + a 1,2-diacyl-sn-glycero-3-phospho-(1'-sn-glycerol) = an S-1,2-diacyl-sn-glyceryl-L-cysteinyl-[prolipoprotein] + sn-glycerol 1-phosphate + H(+). It participates in protein modification; lipoprotein biosynthesis (diacylglyceryl transfer). Catalyzes the transfer of the diacylglyceryl group from phosphatidylglycerol to the sulfhydryl group of the N-terminal cysteine of a prolipoprotein, the first step in the formation of mature lipoproteins. This chain is Phosphatidylglycerol--prolipoprotein diacylglyceryl transferase, found in Thermosynechococcus vestitus (strain NIES-2133 / IAM M-273 / BP-1).